Reading from the N-terminus, the 634-residue chain is uncharacterized protein (634 aa).

The N-terminal stretch at 1–40 (MWLQQRLKGLPGLLSSSWARRLLCLLGLLVLLLWFAGSGA) is a signal peptide. Residues 41-589 (RRAAGGLQLL…DEHMAQQDPG (549 aa)) are Extracellular-facing. Asn363 carries an N-linked (GlcNAc...) asparagine glycan. A helical transmembrane segment spans residues 590 to 610 (LPFLFWFSVASLITLFHLFLF). The Cytoplasmic segment spans residues 611 to 634 (KLIYNEYCGPGAKPFFRNKEDPSV).

Its subcellular location is the membrane. This is an uncharacterized protein from Bos taurus (Bovine).